Reading from the N-terminus, the 119-residue chain is Large ribosomal subunit protein bL20 (119 aa).

This sequence belongs to the bacterial ribosomal protein bL20 family.

Functionally, binds directly to 23S ribosomal RNA and is necessary for the in vitro assembly process of the 50S ribosomal subunit. It is not involved in the protein synthesizing functions of that subunit. The sequence is that of Large ribosomal subunit protein bL20 from Clostridium botulinum (strain ATCC 19397 / Type A).